A 392-amino-acid polypeptide reads, in one-letter code: Succinate--CoA ligase [ADP-forming] subunit beta (392 aa).

An ATP-grasp domain is found at 9-244; sequence KALLAQYGVG…LSEEESSEIE (236 aa). ATP-binding positions include K46, 53–55, E99, L102, and E107; that span reads GRG. N199 and D213 together coordinate Mg(2+). Substrate is bound by residues N264 and 321–323; that span reads GIV.

It belongs to the succinate/malate CoA ligase beta subunit family. As to quaternary structure, heterotetramer of two alpha and two beta subunits. Mg(2+) serves as cofactor.

The enzyme catalyses succinate + ATP + CoA = succinyl-CoA + ADP + phosphate. It catalyses the reaction GTP + succinate + CoA = succinyl-CoA + GDP + phosphate. It participates in carbohydrate metabolism; tricarboxylic acid cycle; succinate from succinyl-CoA (ligase route): step 1/1. Its function is as follows. Succinyl-CoA synthetase functions in the citric acid cycle (TCA), coupling the hydrolysis of succinyl-CoA to the synthesis of either ATP or GTP and thus represents the only step of substrate-level phosphorylation in the TCA. The beta subunit provides nucleotide specificity of the enzyme and binds the substrate succinate, while the binding sites for coenzyme A and phosphate are found in the alpha subunit. This chain is Succinate--CoA ligase [ADP-forming] subunit beta, found in Wolinella succinogenes (strain ATCC 29543 / DSM 1740 / CCUG 13145 / JCM 31913 / LMG 7466 / NCTC 11488 / FDC 602W) (Vibrio succinogenes).